A 492-amino-acid chain; its full sequence is Monocarboxylate transporter 3 (492 aa).

The Cytoplasmic portion of the chain corresponds to 1–14 (MGAGGPRRGAGPPD). Residues 15–35 (GGWGWVVLGACFVVTGFAYGF) traverse the membrane as a helical segment. At 36 to 58 (PKAVSVFFRELKRDFGAGYSDTA) the chain is on the extracellular side. A helical membrane pass occupies residues 59–79 (WVSSIMLAMLYGTGPLSSILV). At 80–85 (TRFGCR) the chain is on the cytoplasmic side. The helical transmembrane segment at 86–106 (PVMLAGGLLASAGMILASFAS) threads the bilayer. Residues 107 to 115 (RLVELYLTA) are Extracellular-facing. The helical transmembrane segment at 116–136 (GVLTGLGLALNFQPSLIMLGL) threads the bilayer. Residues 137–146 (YFERRRPLAN) lie on the Cytoplasmic side of the membrane. A helical transmembrane segment spans residues 147-167 (GLAAAGSPVFLSMLSPLGQLL). The Extracellular segment spans residues 168-172 (GERFG). Residues 173 to 193 (WRGGFLLFGGLLLHCCACGAV) form a helical membrane-spanning segment. Residues 194–228 (MRPPPGPPPRRDPSPHGGPARRRRLLDVAVCTDRA) are Cytoplasmic-facing. A helical membrane pass occupies residues 229–249 (FVVYVVTKFLMALGLFVPAIL). Over 250 to 257 (LVNYAKDA) the chain is Extracellular. Residues 258–278 (GVPDAEAAFLLSIVGFVDIVA) form a helical membrane-spanning segment. Residues 279 to 293 (RPACGALAGLGRLRP) are Cytoplasmic-facing. Residues 294–314 (HVPYLFSLALLANGLTDLISA) form a helical membrane-spanning segment. The Extracellular portion of the chain corresponds to 315–318 (RARS). Residues 319–339 (YGTLVAFCIAFGLSYGMVGAL) form a helical membrane-spanning segment. Topologically, residues 340–352 (QFEVLMATVGAPR) are cytoplasmic. A helical membrane pass occupies residues 353–373 (FPSALGLVLLVEAVAVLIGPP). Residues 374 to 386 (SAGRLVDALKNYE) are Extracellular-facing. A helical transmembrane segment spans residues 387-407 (IIFYLAGSEVALAGVFMAVTT). Topologically, residues 408 to 492 (YCCLRCSKNI…GGHEARGQKA (85 aa)) are cytoplasmic. Positions 419–492 (SGRSAEGGAS…GGHEARGQKA (74 aa)) are disordered. Basolateral sorting signal stretches follow at residues 426–460 (GASD…VLSP) and 461–482 (RAGS…HESI). Over residues 476-492 (ELDHESIGGHEARGQKA) the composition is skewed to basic and acidic residues.

Belongs to the major facilitator superfamily. Monocarboxylate porter (TC 2.A.1.13) family. Expressed exclusively in retinal pigment epithelium and choroid plexus epithelium.

It is found in the basolateral cell membrane. The enzyme catalyses (S)-lactate(in) + H(+)(in) = (S)-lactate(out) + H(+)(out). Functionally, probable retinal pigment epithelium (RPE)-specific proton-coupled L-lactate transporter. May facilitate transport of lactate and H(+) out of the retina and could therefore play an essential role in maintenance of metabolic and ionic homeostasis of the outer retina. The chain is Monocarboxylate transporter 3 (Slc16a8) from Mus musculus (Mouse).